We begin with the raw amino-acid sequence, 224 residues long: ATP-dependent dethiobiotin synthetase BioD (224 aa).

T18 contacts Mg(2+). The active site involves K39. S43 contributes to the substrate binding site. 2 residues coordinate Mg(2+): D56 and E117. ATP contacts are provided by residues D56, 117-120 (EGVG), and 177-178 (NE).

This sequence belongs to the dethiobiotin synthetase family. As to quaternary structure, homodimer. Requires Mg(2+) as cofactor.

It is found in the cytoplasm. The enzyme catalyses (7R,8S)-7,8-diammoniononanoate + CO2 + ATP = (4R,5S)-dethiobiotin + ADP + phosphate + 3 H(+). The protein operates within cofactor biosynthesis; biotin biosynthesis; biotin from 7,8-diaminononanoate: step 1/2. In terms of biological role, catalyzes a mechanistically unusual reaction, the ATP-dependent insertion of CO2 between the N7 and N8 nitrogen atoms of 7,8-diaminopelargonic acid (DAPA, also called 7,8-diammoniononanoate) to form a ureido ring. This Xanthomonas axonopodis pv. citri (strain 306) protein is ATP-dependent dethiobiotin synthetase BioD.